The sequence spans 488 residues: Mannosylglycerate hydrolase MGH2 (488 aa).

Substrate is bound by residues Y94, 98–101 (WNWD), Y146, Q167, and G227. D229 acts as the Proton donor in catalysis. Substrate is bound by residues R262 and 415–416 (YW). E459 functions as the Proton acceptor in the catalytic mechanism.

It belongs to the glycosyl hydrolase 63 family.

The catalysed reaction is (2R)-2-O-(alpha-D-mannosyl)-glycerate + H2O = D-mannose + (R)-glycerate. It carries out the reaction (2R)-2-O-(alpha-D-glucopyranosyl)-glycerate + H2O = (R)-glycerate + D-glucose. Activity is not dependent on divalent cations, but it is enhanced by Mn(2+). Catalyzes the hydrolysis of alpha-D-mannosyl-glycerate (MG) to D-glycerate and D-mannose. Can also hydrolyze alpha-D-glucopyranosyl-glycerate (GG)with lower efficiency. This chain is Mannosylglycerate hydrolase MGH2, found in Selaginella moellendorffii (Spikemoss).